A 368-amino-acid polypeptide reads, in one-letter code: Probable endopolygalacturonase A (368 aa).

The N-terminal stretch at 1–18 (MRSVKLFGLAALGSLGAA) is a signal peptide. The propeptide occupies 19 to 31 (APAPSRVSDLTKR). C35 and C50 are oxidised to a cystine. PbH1 repeat units follow at residues 140 to 162 (LEDS…SVQA), 167 to 192 (LIDI…DISE), 193 to 214 (STGV…AINS), 215 to 235 (GENI…SIGS), 244 to 265 (VKNV…RIKT), 273 to 295 (VSQV…VIEQ), and 307 to 352 (TTGV…DITG). The active-site Proton donor is D207. An intrachain disulfide couples C209 to C225. H229 is an active-site residue. The N-linked (GlcNAc...) asparagine glycan is linked to N246. 2 cysteine pairs are disulfide-bonded: C335/C340 and C359/C368.

Belongs to the glycosyl hydrolase 28 family.

The protein resides in the secreted. It carries out the reaction (1,4-alpha-D-galacturonosyl)n+m + H2O = (1,4-alpha-D-galacturonosyl)n + (1,4-alpha-D-galacturonosyl)m.. In terms of biological role, involved in maceration and soft-rotting of plant tissue. Hydrolyzes the 1,4-alpha glycosidic bonds of de-esterified pectate in the smooth region of the plant cell wall. This is Probable endopolygalacturonase A (pgaA) from Aspergillus fumigatus (strain CBS 144.89 / FGSC A1163 / CEA10) (Neosartorya fumigata).